Here is a 225-residue protein sequence, read N- to C-terminus: Glutathione S-transferase A (225 aa).

The 83-residue stretch at 3–85 folds into the GST N-terminal domain; that stretch reads KDMTLLWGSG…YLESQFKSQG (83 aa). Arginine 18 contacts glutathione. One can recognise a GST C-terminal domain in the interval 92–217; it reads CPAEQAMMYQ…WPPTWLESPQ (126 aa).

Belongs to the GST superfamily. Theta family. As to quaternary structure, homodimer. Found in all the tissues examined. Highest values found in liver and in intestinal mucosa.

It localises to the cytoplasm. The enzyme catalyses RX + glutathione = an S-substituted glutathione + a halide anion + H(+). In terms of biological role, conjugation of reduced glutathione to a wide number of exogenous and endogenous hydrophobic electrophiles. The protein is Glutathione S-transferase A of Pleuronectes platessa (European plaice).